The primary structure comprises 307 residues: tRNA pseudouridine synthase B (307 aa).

Residue Asp38 is the Nucleophile of the active site.

Belongs to the pseudouridine synthase TruB family. Type 1 subfamily.

The catalysed reaction is uridine(55) in tRNA = pseudouridine(55) in tRNA. Responsible for synthesis of pseudouridine from uracil-55 in the psi GC loop of transfer RNAs. This is tRNA pseudouridine synthase B from Bacillus cereus (strain ATCC 14579 / DSM 31 / CCUG 7414 / JCM 2152 / NBRC 15305 / NCIMB 9373 / NCTC 2599 / NRRL B-3711).